The following is a 419-amino-acid chain: tRNA modification GTPase MnmE (419 aa).

Arg-20, Glu-76, and Arg-115 together coordinate (6S)-5-formyl-5,6,7,8-tetrahydrofolate. In terms of domain architecture, TrmE-type G spans 211-348 (GYEVAIIGPP…LLDLVYDRLR (138 aa)). A K(+)-binding site is contributed by Asn-221. Residues 221 to 226 (NAGKST), 240 to 246 (SEIAGTT), and 265 to 268 (DTAG) each bind GTP. Ser-225 provides a ligand contact to Mg(2+). Residues Ser-240, Ile-242, and Thr-245 each contribute to the K(+) site. Thr-246 lines the Mg(2+) pocket. Lys-419 serves as a coordination point for (6S)-5-formyl-5,6,7,8-tetrahydrofolate.

It belongs to the TRAFAC class TrmE-Era-EngA-EngB-Septin-like GTPase superfamily. TrmE GTPase family. In terms of assembly, homodimer. Heterotetramer of two MnmE and two MnmG subunits. K(+) serves as cofactor.

It localises to the cytoplasm. In terms of biological role, exhibits a very high intrinsic GTPase hydrolysis rate. Involved in the addition of a carboxymethylaminomethyl (cmnm) group at the wobble position (U34) of certain tRNAs, forming tRNA-cmnm(5)s(2)U34. This is tRNA modification GTPase MnmE from Paracoccus denitrificans (strain Pd 1222).